The primary structure comprises 92 residues: Small ribosomal subunit protein uS19 (92 aa).

It belongs to the universal ribosomal protein uS19 family.

In terms of biological role, protein S19 forms a complex with S13 that binds strongly to the 16S ribosomal RNA. The chain is Small ribosomal subunit protein uS19 from Aeromonas hydrophila subsp. hydrophila (strain ATCC 7966 / DSM 30187 / BCRC 13018 / CCUG 14551 / JCM 1027 / KCTC 2358 / NCIMB 9240 / NCTC 8049).